A 133-amino-acid polypeptide reads, in one-letter code: ATP synthase epsilon chain, chloroplastic (133 aa).

The protein belongs to the ATPase epsilon chain family. As to quaternary structure, F-type ATPases have 2 components, CF(1) - the catalytic core - and CF(0) - the membrane proton channel. CF(1) has five subunits: alpha(3), beta(3), gamma(1), delta(1), epsilon(1). CF(0) has three main subunits: a, b and c.

The protein resides in the plastid. It is found in the chloroplast thylakoid membrane. Its function is as follows. Produces ATP from ADP in the presence of a proton gradient across the membrane. The sequence is that of ATP synthase epsilon chain, chloroplastic from Chara vulgaris (Common stonewort).